A 427-amino-acid polypeptide reads, in one-letter code: Zinc finger protein 134 (427 aa).

Lys20 participates in a covalent cross-link: Glycyl lysine isopeptide (Lys-Gly) (interchain with G-Cter in SUMO2). Residues 50-72 (LPCDICGPILKDILHLDEHQGTH) form a C2H2-type 1 zinc finger. Residues 78 to 100 (HTCGACGRQFWFSANLHQYQKCY) form a C2H2-type 2; degenerate zinc finger. Glycyl lysine isopeptide (Lys-Gly) (interchain with G-Cter in SUMO2) cross-links involve residues Lys135 and Lys139. 9 C2H2-type zinc fingers span residues 176–198 (YKCS…QRIH), 204–226 (YECS…QRIH), 232–254 (YECS…KRIH), 260–282 (YKCN…QRVH), 288–310 (YKCS…ESIH), 316–338 (YDCS…QRIH), 344–366 (FECI…QRVH), 372–394 (FVCS…QRVH), and 400–422 (YECS…QKVH).

It belongs to the krueppel C2H2-type zinc-finger protein family.

Its subcellular location is the nucleus. In terms of biological role, may be involved in transcriptional regulation. The protein is Zinc finger protein 134 (ZNF134) of Homo sapiens (Human).